The following is a 44-amino-acid chain: Unknown protein 9 (44 aa).

The polypeptide is Unknown protein 9 (Pseudotsuga menziesii (Douglas-fir)).